We begin with the raw amino-acid sequence, 115 residues long: Large ribosomal subunit protein bL20c (115 aa).

The protein belongs to the bacterial ribosomal protein bL20 family.

It is found in the plastid. The protein localises to the chloroplast. Its function is as follows. Binds directly to 23S ribosomal RNA and is necessary for the in vitro assembly process of the 50S ribosomal subunit. It is not involved in the protein synthesizing functions of that subunit. In Pleurastrum terricola (Filamentous green alga), this protein is Large ribosomal subunit protein bL20c.